Consider the following 180-residue polypeptide: MFHATTILAYKGKNKSVIGGDGQVSFGNTVLKNNAVKIRKLNNGKVLAGFAGSTADAFNLFDMFEKLLSSSKGDLLKAAIDFSKEWRKDKYLRKLEAMMLVLDRNHIFLLSGTGDVVEPEDGAIAAIGSGGNYALSAARALAKHSNLDEENLVKESLQIAGEICIYTNTNIKTYVIEDDK.

Threonine 5 is a catalytic residue. Na(+)-binding residues include glycine 161, cysteine 164, and threonine 167.

Belongs to the peptidase T1B family. HslV subfamily. As to quaternary structure, a double ring-shaped homohexamer of HslV is capped on each side by a ring-shaped HslU homohexamer. The assembly of the HslU/HslV complex is dependent on binding of ATP.

The protein resides in the cytoplasm. The catalysed reaction is ATP-dependent cleavage of peptide bonds with broad specificity.. Its activity is regulated as follows. Allosterically activated by HslU binding. In terms of biological role, protease subunit of a proteasome-like degradation complex believed to be a general protein degrading machinery. In Campylobacter lari (strain RM2100 / D67 / ATCC BAA-1060), this protein is ATP-dependent protease subunit HslV.